Here is a 282-residue protein sequence, read N- to C-terminus: Blarina toxin (282 aa).

A signal peptide spans 1 to 17; that stretch reads MCFLLLCLTLTLAGTGA. Positions 18–29 are cleaved as a propeptide — activation peptide; the sequence is VPTGPSIEIHSR. Residues 30-279 form the Peptidase S1 domain; sequence IIGGWECDKH…YISWIQETIK (250 aa). 5 disulfides stabilise this stretch: C36–C194, C57–C73, C170–C240, C205–C219, and C230–C255. H72 (charge relay system) is an active-site residue. Residue S100 is glycosylated (O-linked (GalNAc...) serine). N-linked (GlcNAc...) asparagine glycans are attached at residues N109 and N122. D138 functions as the Charge relay system in the catalytic mechanism. Catalysis depends on S234, which acts as the Charge relay system.

Belongs to the peptidase S1 family. Kallikrein subfamily. In terms of tissue distribution, submaxillary and sublingual salivary glands.

The protein resides in the secreted. Its activity is regulated as follows. Strongly inhibited by aprotinin, moderately inhibited by secretory leukoprotease inhibitor, the Kunitz-type soybean trypsin inhibitor, and leupeptin, and not inhibited by urinary trypsin inhibitor or alpha-1 protease inhibitor. In terms of biological role, has kallikrein-like activity, converts kininogens to kinins, and has dilatory effects on the blood vessel walls. Shows highest activity toward Pro-Phe-Arg-MCA and Boc-Val-Leu-Lys-MCA in vitro. Has preference for Arg and Lys in position P1 and hydrophobic residues in position P2. The sequence is that of Blarina toxin (BTX) from Blarina brevicauda (Northern short-tailed shrew).